Here is a 184-residue protein sequence, read N- to C-terminus: ATP synthase subunit b, chloroplastic (184 aa).

A helical transmembrane segment spans residues 27 to 49 (LATNPINLSVVLGVLIFFGKGVL).

The protein belongs to the ATPase B chain family. F-type ATPases have 2 components, F(1) - the catalytic core - and F(0) - the membrane proton channel. F(1) has five subunits: alpha(3), beta(3), gamma(1), delta(1), epsilon(1). F(0) has four main subunits: a(1), b(1), b'(1) and c(10-14). The alpha and beta chains form an alternating ring which encloses part of the gamma chain. F(1) is attached to F(0) by a central stalk formed by the gamma and epsilon chains, while a peripheral stalk is formed by the delta, b and b' chains.

The protein localises to the plastid. The protein resides in the chloroplast thylakoid membrane. In terms of biological role, f(1)F(0) ATP synthase produces ATP from ADP in the presence of a proton or sodium gradient. F-type ATPases consist of two structural domains, F(1) containing the extramembraneous catalytic core and F(0) containing the membrane proton channel, linked together by a central stalk and a peripheral stalk. During catalysis, ATP synthesis in the catalytic domain of F(1) is coupled via a rotary mechanism of the central stalk subunits to proton translocation. Component of the F(0) channel, it forms part of the peripheral stalk, linking F(1) to F(0). The sequence is that of ATP synthase subunit b, chloroplastic from Oenothera argillicola (Appalachian evening primrose).